The chain runs to 195 residues: Adenylate kinase (195 aa).

10–15 (GAGKGT) provides a ligand contact to ATP. Positions 30–59 (STGDMLRAAVAAGTPVGLKAKAVMDAGGLV) are NMP. Residues T31, R36, 57-59 (GLV), 85-88 (GFPR), and Q92 each bind AMP. An LID region spans residues 126 to 143 (NRAAEAQAKGEAVRKDDD). R127 lines the ATP pocket. R150 provides a ligand contact to AMP. A178 is a binding site for ATP.

Belongs to the adenylate kinase family. In terms of assembly, monomer.

The protein resides in the cytoplasm. The catalysed reaction is AMP + ATP = 2 ADP. Its pathway is purine metabolism; AMP biosynthesis via salvage pathway; AMP from ADP: step 1/1. Catalyzes the reversible transfer of the terminal phosphate group between ATP and AMP. Plays an important role in cellular energy homeostasis and in adenine nucleotide metabolism. The sequence is that of Adenylate kinase from Xanthobacter autotrophicus (strain ATCC BAA-1158 / Py2).